Consider the following 327-residue polypeptide: GMP reductase (327 aa).

Cys176 serves as the catalytic Thioimidate intermediate. Position 205–228 (205–228 (IIADGGIRTHGDIAKSIRFGASMV)) interacts with NADP(+).

Belongs to the IMPDH/GMPR family. GuaC type 2 subfamily.

The catalysed reaction is IMP + NH4(+) + NADP(+) = GMP + NADPH + 2 H(+). Its function is as follows. Catalyzes the irreversible NADPH-dependent deamination of GMP to IMP. It functions in the conversion of nucleobase, nucleoside and nucleotide derivatives of G to A nucleotides, and in maintaining the intracellular balance of A and G nucleotides. The protein is GMP reductase of Streptococcus suis (strain 05ZYH33).